Here is a 707-residue protein sequence, read N- to C-terminus: Matrix metalloproteinase-9 (707 aa).

Residues 1–19 (MSPRQPLVLALLVLGCCSA) form the signal peptide. A propeptide spans 20–106 (APRRRQPTLV…PRCGVPDVGK (87 aa)) (activation peptide). Asn88 is a glycosylation site (N-linked (GlcNAc...) asparagine). The Cysteine switch signature appears at 97-104 (PRCGVPDV). Residue Cys99 participates in Zn(2+) binding. 2 N-linked (GlcNAc...) asparagine glycosylation sites follow: Asn120 and Asn127. Asp131 and Asp165 together coordinate Ca(2+). The Zn(2+) site is built by His175 and Asp177. Ca(2+) contacts are provided by Asp182, Gly183, Asp185, and Leu187. His190 is a Zn(2+) binding site. Ca(2+) contacts are provided by Gly197, Gln199, and Asp201. His203 is a binding site for Zn(2+). Asp205, Asp206, and Glu208 together coordinate Ca(2+). 3 consecutive Fibronectin type-II domains span residues 225–273 (ADGA…FCPS), 283–331 (ADGK…FCPT), and 342–390 (SAGE…FCPD). Disulfide bonds link Cys230–Cys256, Cys244–Cys271, Cys288–Cys314, Cys302–Cys329, Cys347–Cys373, and Cys361–Cys388. His401 contributes to the Zn(2+) binding site. Residue Glu402 is part of the active site. Residues His405 and His411 each coordinate Zn(2+). The segment at 437 to 508 (RGIQHLYGPN…ASPSAAPTAS (72 aa)) is disordered. Positions 446–467 (NPNPQPPATTTPEPQPTAPPTA) are enriched in pro residues. Residues 481–493 (PTTSPTGAPSAGP) show a composition bias toward low complexity. An intrachain disulfide couples Cys516 to Cys704. Hemopexin repeat units lie at residues 518–563 (VNVF…WPAL), 564–608 (PAKL…GLGP), 610–657 (VPHV…FPGV), and 658–704 (PLNT…ILHC).

The protein belongs to the peptidase M10A family. As to quaternary structure, exists as monomer or homodimer; disulfide-linked. Also exists as heterodimer with LCN2. Macrophages and transformed cell lines produce only the monomeric form. Interacts with ECM1. Requires Zn(2+) as cofactor. Ca(2+) is required as a cofactor. In terms of processing, N- and O-glycosylated. As to expression, osteoclasts.

The protein localises to the secreted. It localises to the extracellular space. It is found in the extracellular matrix. It carries out the reaction Cleavage of gelatin types I and V and collagen types IV and V.. In terms of biological role, matrix metalloproteinase that plays an essential role in local proteolysis of the extracellular matrix and in leukocyte migration. Could play a role in bone osteoclastic resorption. Cleaves KiSS1 at a Gly-|-Leu bond. Cleaves NINJ1 to generate the Secreted ninjurin-1 form. Cleaves type IV and type V collagen into large C-terminal three quarter fragments and shorter N-terminal one quarter fragments. Degrades fibronectin but not laminin or Pz-peptide. The sequence is that of Matrix metalloproteinase-9 from Oryctolagus cuniculus (Rabbit).